Consider the following 450-residue polypeptide: UDP-N-acetylmuramoylalanine--D-glutamate ligase (450 aa).

119–125 serves as a coordination point for ATP; it reads GSNGKTT.

This sequence belongs to the MurCDEF family.

It localises to the cytoplasm. The enzyme catalyses UDP-N-acetyl-alpha-D-muramoyl-L-alanine + D-glutamate + ATP = UDP-N-acetyl-alpha-D-muramoyl-L-alanyl-D-glutamate + ADP + phosphate + H(+). Its pathway is cell wall biogenesis; peptidoglycan biosynthesis. Its function is as follows. Cell wall formation. Catalyzes the addition of glutamate to the nucleotide precursor UDP-N-acetylmuramoyl-L-alanine (UMA). This Streptococcus thermophilus (strain CNRZ 1066) protein is UDP-N-acetylmuramoylalanine--D-glutamate ligase.